The chain runs to 564 residues: Septation ring formation regulator EzrA (564 aa).

Over 1-2 (ME) the chain is Extracellular. The chain crosses the membrane as a helical span at residues 3 to 21 (FVIGLLALFLILFATGYLF). Residues 22–564 (RKNIYKEIDR…RLEADAKQPE (543 aa)) lie on the Cytoplasmic side of the membrane. Coiled-coil stretches lie at residues 99–159 (QKSK…AYSH), 243–281 (KGYK…EAAA), and 310–498 (KVPE…VELV).

It belongs to the EzrA family.

It localises to the cell membrane. Its function is as follows. Negative regulator of FtsZ ring formation; modulates the frequency and position of FtsZ ring formation. Inhibits FtsZ ring formation at polar sites. Interacts either with FtsZ or with one of its binding partners to promote depolymerization. In Bacillus licheniformis (strain ATCC 14580 / DSM 13 / JCM 2505 / CCUG 7422 / NBRC 12200 / NCIMB 9375 / NCTC 10341 / NRRL NRS-1264 / Gibson 46), this protein is Septation ring formation regulator EzrA.